Here is a 381-residue protein sequence, read N- to C-terminus: Cell division protein FtsZ (381 aa).

The segment at 1-25 (MKFINDAIKESEKREKPSSSSMNSE) is disordered. The span at 7 to 17 (AIKESEKREKP) shows a compositional bias: basic and acidic residues. GTP contacts are provided by residues 48 to 52 (GAGNN), 135 to 137 (GTG), Glu166, Arg170, and Asp213.

This sequence belongs to the FtsZ family. Homodimer. Polymerizes to form a dynamic ring structure in a strictly GTP-dependent manner. Interacts directly with several other division proteins.

It is found in the cytoplasm. Essential cell division protein that forms a contractile ring structure (Z ring) at the future cell division site. The regulation of the ring assembly controls the timing and the location of cell division. One of the functions of the FtsZ ring is to recruit other cell division proteins to the septum to produce a new cell wall between the dividing cells. Binds GTP and shows GTPase activity. This chain is Cell division protein FtsZ, found in Methanothermobacter thermautotrophicus (strain ATCC 29096 / DSM 1053 / JCM 10044 / NBRC 100330 / Delta H) (Methanobacterium thermoautotrophicum).